A 200-amino-acid chain; its full sequence is MSYDKKADVTSLDEDLRQLRESKFSPEAIQNIKIWVYKSVLKEIAPPGDLLECLKDGTVLCKLANILYEADTGEANHISWKSSKMPFVQMDQISQFLSFSRKYGVPEDELFQTIDLFEKKDPAIVFQTLKSLSRYANKKHTDRFPVLGPQLSTKKPRPPVKSKPKHLQDGTGWSTFEYGYMKGASQATEGVVLGQRRDIV.

Residue Ser-2 is modified to N-acetylserine. Ser-11 is subject to Phosphoserine. Residues 26–136 (PEAIQNIKIW…QTLKSLSRYA (111 aa)) enclose the Calponin-homology (CH) domain. The disordered stretch occupies residues 144–168 (FPVLGPQLSTKKPRPPVKSKPKHLQ). The interval 151–164 (LSTKKPRPPVKSKP) is interaction with SH3 domain of ABP1. The span at 154–165 (KKPRPPVKSKPK) shows a compositional bias: basic residues.

As to quaternary structure, binds to actin. Interacts with ABP1.

The protein resides in the cytoplasm. Its subcellular location is the cytoskeleton. It is found in the actin patch. Functionally, has actin-binding and actin-bundling activity. Stabilizes actin filaments against disassembly. This is Transgelin (SCP1) from Saccharomyces cerevisiae (strain ATCC 204508 / S288c) (Baker's yeast).